A 905-amino-acid chain; its full sequence is DNA mismatch repair protein MutS (905 aa).

Residues Met-1 to Lys-95 form a disordered region. The span at Asn-38–Ala-50 shows a compositional bias: basic and acidic residues. ATP is bound at residue Gly-721 to Ser-728.

Belongs to the DNA mismatch repair MutS family.

In terms of biological role, this protein is involved in the repair of mismatches in DNA. It is possible that it carries out the mismatch recognition step. This protein has a weak ATPase activity. The sequence is that of DNA mismatch repair protein MutS from Synechococcus sp. (strain CC9902).